The following is a 121-amino-acid chain: Small ribosomal subunit protein uS13 (121 aa).

Residues 92 to 121 (RKGLPMRGQRTRTNARTRKGPRRAAQALKK) form a disordered region.

It belongs to the universal ribosomal protein uS13 family. In terms of assembly, part of the 30S ribosomal subunit. Forms a loose heterodimer with protein S19. Forms two bridges to the 50S subunit in the 70S ribosome.

Its function is as follows. Located at the top of the head of the 30S subunit, it contacts several helices of the 16S rRNA. In the 70S ribosome it contacts the 23S rRNA (bridge B1a) and protein L5 of the 50S subunit (bridge B1b), connecting the 2 subunits; these bridges are implicated in subunit movement. Contacts the tRNAs in the A and P-sites. This Burkholderia thailandensis (strain ATCC 700388 / DSM 13276 / CCUG 48851 / CIP 106301 / E264) protein is Small ribosomal subunit protein uS13.